The sequence spans 247 residues: 6-carboxyhexanoate--CoA ligase (247 aa).

This sequence belongs to the BioW family. In terms of assembly, homodimer. It depends on Mg(2+) as a cofactor.

The enzyme catalyses heptanedioate + ATP + CoA = 6-carboxyhexanoyl-CoA + AMP + diphosphate. The protein operates within metabolic intermediate metabolism; pimeloyl-CoA biosynthesis; pimeloyl-CoA from pimelate: step 1/1. Functionally, catalyzes the transformation of pimelate into pimeloyl-CoA with concomitant hydrolysis of ATP to AMP. This Corynebacterium diphtheriae (strain ATCC 700971 / NCTC 13129 / Biotype gravis) protein is 6-carboxyhexanoate--CoA ligase.